The following is a 57-amino-acid chain: Large ribosomal subunit protein bL32 (57 aa).

Residues 1 to 38 form a disordered region; sequence MAVQQNKPTRSKRGMRRSHDALTAVTSLSVDKTSGEKH.

Belongs to the bacterial ribosomal protein bL32 family.

The protein is Large ribosomal subunit protein bL32 of Escherichia coli O7:K1 (strain IAI39 / ExPEC).